The following is a 394-amino-acid chain: Ribulose bisphosphate carboxylase large chain (394 aa).

Position 5 is an N6,N6,N6-trimethyllysine (Lys-5). Positions 114 and 164 each coordinate substrate. The active-site Proton acceptor is the Lys-166. A substrate-binding site is contributed by Lys-168. Positions 192, 194, and 195 each coordinate Mg(2+). Lys-192 carries the post-translational modification N6-carboxylysine. Residue His-285 is the Proton acceptor of the active site. 3 residues coordinate substrate: Arg-286, His-318, and Ser-370.

This sequence belongs to the RuBisCO large chain family. Type I subfamily. Heterohexadecamer of 8 large chains and 8 small chains. Requires Mg(2+) as cofactor.

The protein resides in the plastid. It localises to the chloroplast. It carries out the reaction 2 (2R)-3-phosphoglycerate + 2 H(+) = D-ribulose 1,5-bisphosphate + CO2 + H2O. The catalysed reaction is D-ribulose 1,5-bisphosphate + O2 = 2-phosphoglycolate + (2R)-3-phosphoglycerate + 2 H(+). In terms of biological role, ruBisCO catalyzes two reactions: the carboxylation of D-ribulose 1,5-bisphosphate, the primary event in carbon dioxide fixation, as well as the oxidative fragmentation of the pentose substrate in the photorespiration process. Both reactions occur simultaneously and in competition at the same active site. The protein is Ribulose bisphosphate carboxylase large chain (rbcL) of Cabomba caroliniana (Carolina fanwort).